A 161-amino-acid chain; its full sequence is Allophycocyanin alpha-B chain (161 aa).

At Asn71 the chain carries N4-methylasparagine. Cys81 is a (2R,3E)-phycocyanobilin binding site.

The protein belongs to the phycobiliprotein family. In terms of processing, contains one covalently linked bilin chromophore.

The protein localises to the plastid. It is found in the chloroplast thylakoid membrane. In terms of biological role, allophycocyanin is a photosynthetic bile pigment-protein complex with maximum absorption at approximately 650 nanometers. The polypeptide is Allophycocyanin alpha-B chain (apcD) (Pyropia yezoensis (Susabi-nori)).